We begin with the raw amino-acid sequence, 1886 residues long: Highly reducing polyketide synthase (1886 aa).

Residues 11-434 (TQDVAIVGLS…GANAHAVLDD (424 aa)) form the Ketosynthase family 3 (KS3) domain. Active-site for beta-ketoacyl synthase activity residues include Cys-182, His-317, and His-357. Positions 483-568 (FLFSGQDQQS…VNNDLANTKK (86 aa)) are malonyl-CoA:ACP transacylase (MAT) domain. Residues 616 to 750 (RSLIGAPQPS…GLLSIEYESS (135 aa)) form an N-terminal hotdog fold region. The region spanning 616 to 926 (RSLIGAPQPS…CTAISEATNP (311 aa)) is the PKS/mFAS DH domain. The segment at 618–924 (LIGAPQPSYG…LHCTAISEAT (307 aa)) is dehydratase (DH) domain. The active-site Proton acceptor; for dehydratase activity is the His-648. Residues 778–926 (HTTQSPKALY…CTAISEATNP (149 aa)) form a C-terminal hotdog fold region. Asp-838 serves as the catalytic Proton donor; for dehydratase activity. The interval 1169–1480 (GMLDEIYFEA…AGKHMGKVAL (312 aa)) is enoylreductase (ER) domain. A catalytic ketoreductase (KRc) domain region spans residues 1503 to 1681 (ATYVLVGGFG…VSLDLGLMRD (179 aa)). Residues 1802-1879 (DVTDLVLEIL…DLVDKIVAKS (78 aa)) enclose the Carrier domain. Ser-1839 carries the post-translational modification O-(pantetheine 4'-phosphoryl)serine.

The protein operates within mycotoxin biosynthesis. In terms of biological role, highly reducing polyketide synthase; part of the gene cluster that mediates the biosynthesis of the selective antifungal agent ascochitine, an o-quinone methide that plays a possible protective role against other microbial competitors in nature and is considered to be important for pathogenicity of legume-associated Didymella species. The pathway probably begins with the synthesis of a keto-aldehyde intermediate by the ascochitine non-reducing polyketide synthase pksAC from successive condensations of 4 malonyl-CoA units, presumably with a simple acetyl-CoA starter unit. Release of the keto-aldehyde intermediate is consistent with the presence of the C-terminal reductive release domain. The HR-PKS (orf7) probably makes a diketide starter unit which is passed to the non-reducing polyketide synthase pksAC for further extension, producing ascochital and ascochitine. The aldehyde dehydrogenase (orf1), the 2-oxoglutarate-dependent dioxygenase (orf3) and the dehydrogenase (orf9) are probably involved in subsequent oxidations of methyl groups to the carboxylic acid of the heterocyclic ring. The ascochitine gene cluster also includes a gene encoding a short peptide with a cupin domain (orf2) that is often found in secondary metabolite gene clusters and which function has still to be determined. The polypeptide is Highly reducing polyketide synthase (Didymella fabae (Leaf and pod spot disease fungus)).